Here is a 150-residue protein sequence, read N- to C-terminus: UPF0756 membrane protein plu2726 (150 aa).

Transmembrane regions (helical) follow at residues 8–28 (LLVL…TVTL), 51–71 (YGLT…IASG), 88–108 (LLAI…VSLM), and 123–143 (VLGV…AGIL).

This sequence belongs to the UPF0756 family.

It is found in the cell membrane. The sequence is that of UPF0756 membrane protein plu2726 from Photorhabdus laumondii subsp. laumondii (strain DSM 15139 / CIP 105565 / TT01) (Photorhabdus luminescens subsp. laumondii).